We begin with the raw amino-acid sequence, 226 residues long: PKHD-type hydroxylase mma_3620 (226 aa).

The Fe2OG dioxygenase domain maps to 78–178 (RYMPPLFNRY…RVCSFFWLQS (101 aa)). Fe cation contacts are provided by His-96, Asp-98, and His-159. Arg-169 is a binding site for 2-oxoglutarate.

Fe(2+) serves as cofactor. Requires L-ascorbate as cofactor.

In Janthinobacterium sp. (strain Marseille) (Minibacterium massiliensis), this protein is PKHD-type hydroxylase mma_3620.